The chain runs to 214 residues: Adenylate kinase (214 aa).

10 to 15 (GAGKGT) contributes to the ATP binding site. The interval 30–59 (STGDMLRAAVKAGSELGLKAKEIMDAGKLV) is NMP. AMP is bound by residues Thr31, Arg36, 57–59 (KLV), 85–88 (GFPR), and Gln92. The LID stretch occupies residues 122–159 (GRRVHAASGRVYHVKFNPPKVEDKDDVTGEDLTIRKDD). Residues Arg123 and 132-133 (VY) each bind ATP. AMP-binding residues include Arg156 and Arg167. Arg200 contacts ATP.

Belongs to the adenylate kinase family. Monomer.

Its subcellular location is the cytoplasm. It catalyses the reaction AMP + ATP = 2 ADP. Its pathway is purine metabolism; AMP biosynthesis via salvage pathway; AMP from ADP: step 1/1. In terms of biological role, catalyzes the reversible transfer of the terminal phosphate group between ATP and AMP. Plays an important role in cellular energy homeostasis and in adenine nucleotide metabolism. This Yersinia enterocolitica serotype O:8 / biotype 1B (strain NCTC 13174 / 8081) protein is Adenylate kinase.